The sequence spans 1032 residues: Beta-galactosidase (1032 aa).

N100 and D198 together coordinate substrate. Residue D198 participates in Na(+) binding. Residues E413, H415, and E458 each contribute to the Mg(2+) site. Residues E458 and 534-537 (EYAH) each bind substrate. E458 (proton donor) is an active-site residue. E534 serves as the catalytic Nucleophile. Residue N594 participates in Mg(2+) binding. The Na(+) site is built by F598 and N601. Residues N601 and W1006 each coordinate substrate.

This sequence belongs to the glycosyl hydrolase 2 family. As to quaternary structure, homotetramer. Requires Mg(2+) as cofactor. It depends on Na(+) as a cofactor.

The enzyme catalyses Hydrolysis of terminal non-reducing beta-D-galactose residues in beta-D-galactosides.. This Vibrio vulnificus (strain CMCP6) protein is Beta-galactosidase.